Reading from the N-terminus, the 668-residue chain is Fructose-1,6-bisphosphatase class 3 (668 aa).

The protein belongs to the FBPase class 3 family. The cofactor is Mn(2+).

The catalysed reaction is beta-D-fructose 1,6-bisphosphate + H2O = beta-D-fructose 6-phosphate + phosphate. It functions in the pathway carbohydrate biosynthesis; gluconeogenesis. This chain is Fructose-1,6-bisphosphatase class 3, found in Clostridium botulinum (strain 657 / Type Ba4).